The following is a 314-amino-acid chain: Porphobilinogen deaminase (314 aa).

Cysteine 242 is subject to S-(dipyrrolylmethanemethyl)cysteine.

Belongs to the HMBS family. As to quaternary structure, monomer. Requires dipyrromethane as cofactor.

The catalysed reaction is 4 porphobilinogen + H2O = hydroxymethylbilane + 4 NH4(+). It participates in porphyrin-containing compound metabolism; protoporphyrin-IX biosynthesis; coproporphyrinogen-III from 5-aminolevulinate: step 2/4. Its function is as follows. Tetrapolymerization of the monopyrrole PBG into the hydroxymethylbilane pre-uroporphyrinogen in several discrete steps. This is Porphobilinogen deaminase (hemC) from Bacillus subtilis (strain 168).